Here is a 511-residue protein sequence, read N- to C-terminus: Cytochrome P450 monooxygenase PUL2 (511 aa).

A helical membrane pass occupies residues 14–34 (WMAFVYFTPVLFVVLYLLKEW). 3 N-linked (GlcNAc...) asparagine glycosylation sites follow: Asn116, Asn141, and Asn442. Position 462 (Cys462) interacts with heme.

The protein belongs to the cytochrome P450 family. Heme serves as cofactor.

It is found in the membrane. It functions in the pathway siderophore biosynthesis. Cytochrome P450 monooxygenase; part of the PUL gene cluster that mediates the formation of pulcherrimin, a red iron-containing pigment composed of two cyclized and modified leucine molecules that acts as a siderophore, a chelator that binds iron outside the cell for subsequent uptake. Two leucine molecules are cyclized via a cyclodipeptide synthase, and the resulting diketopiperazine is oxidized by a cytochrome P450 monooxygenase to generate pulcherriminic acid (PA), which can then spontaneously bind iron to form pulcherrimin. The probable cyclodipeptide synthase PUL1 and the cytochrome P450 monooxygenase PUL2 encode the enzymes responsible for the two-step pulcherrimin biosynthesis pathway. This chain is Cytochrome P450 monooxygenase PUL2, found in Kluyveromyces lactis (strain ATCC 8585 / CBS 2359 / DSM 70799 / NBRC 1267 / NRRL Y-1140 / WM37) (Yeast).